The chain runs to 219 residues: Predicted GPI-anchored protein 6 (219 aa).

The signal sequence occupies residues 1-19; it reads MQFQTLLVVAGSLVASTLA. N-linked (GlcNAc...) asparagine glycans are attached at residues asparagine 21, asparagine 173, and asparagine 188. The GPI-anchor amidated glycine moiety is linked to residue glycine 194. The propeptide at 195-219 is removed in mature form; the sequence is GAVGGASNQITVGFAAIAGLAAILL.

The protein belongs to the flocculin family. The GPI-anchor is attached to the protein in the endoplasmic reticulum and serves to target the protein to the cell surface. There, the glucosamine-inositol phospholipid moiety is cleaved off and the GPI-modified mannoprotein is covalently attached via its lipidless GPI glycan remnant to the 1,6-beta-glucan of the outer cell wall layer.

It localises to the secreted. The protein resides in the cell wall. Its subcellular location is the membrane. Functionally, probable cell wall protein that participates directly in adhesive cell-cell interactions. This is Predicted GPI-anchored protein 6 (PGA6) from Candida albicans (strain SC5314 / ATCC MYA-2876) (Yeast).